The primary structure comprises 110 residues: Ribonuclease (110 aa).

Residue glutamate 73 is the Proton acceptor of the active site. The Proton donor role is filled by histidine 102.

Belongs to the ribonuclease N1/T1 family.

It localises to the secreted. Functionally, hydrolyzes phosphodiester bonds in RNA, poly- and oligoribonucleotides resulting in 3'-nucleoside monophosphates via 2',3'-cyclophosphate intermediates. This chain is Ribonuclease, found in Niallia circulans (Bacillus circulans).